The primary structure comprises 1098 residues: Tudor domain-containing protein 7 (1098 aa).

HTH OST-type domains are found at residues 3–76 (EGDL…YAMA) and 233–302 (KMDE…YPAK). Serine 319 bears the Phosphoserine mark. The HTH OST-type 3 domain occupies 337-406 (MAGDFKEKVA…PQKAILYAKL (70 aa)). 2 consecutive Tudor domains span residues 513 to 570 (AVNV…FCSL) and 703 to 760 (LPFC…FLQE). Phosphoserine is present on serine 859. The segment at 861-1098 (NSKNGNMRVS…EYLIELSKVN (238 aa)) is interaction with CDK17. The interval 893-1098 (TSSFSTEELP…EYLIELSKVN (206 aa)) is interaction with CABLES1.

It belongs to the TDRD7 family. As to quaternary structure, found in a mRNP complex, at least composed of TDRD1, TDRD6, TDRD7 and DDX4. Found in a complex containing CABLES1, CDK16 and CDK17. Interacts with CABLES1, CDK17 and PIWIL1.

It is found in the cytoplasm. Its function is as follows. Component of specific cytoplasmic RNA granules involved in post-transcriptional regulation of specific genes: probably acts by binding to specific mRNAs and regulating their translation. Required for lens transparency during lens development, by regulating translation of genes such as CRYBB3 and HSPB1 in the developing lens. Also required during spermatogenesis. The chain is Tudor domain-containing protein 7 (TDRD7) from Pongo abelii (Sumatran orangutan).